Reading from the N-terminus, the 279-residue chain is Oxygen-dependent coproporphyrinogen-III oxidase (279 aa).

Substrate is bound at residue serine 102. Residues histidine 106 and histidine 116 each coordinate a divalent metal cation. The Proton donor role is filled by histidine 116. 118–120 (NTR) is a binding site for substrate. The a divalent metal cation site is built by histidine 149 and histidine 179. The segment at 244–279 (YVEFNLLYDRGTKFGLMTDGNVEAILMSLPPEVKFN) is important for dimerization.

It belongs to the aerobic coproporphyrinogen-III oxidase family. In terms of assembly, homodimer. Requires a divalent metal cation as cofactor.

Its subcellular location is the cytoplasm. The catalysed reaction is coproporphyrinogen III + O2 + 2 H(+) = protoporphyrinogen IX + 2 CO2 + 2 H2O. It functions in the pathway porphyrin-containing compound metabolism; protoporphyrin-IX biosynthesis; protoporphyrinogen-IX from coproporphyrinogen-III (O2 route): step 1/1. In terms of biological role, involved in the heme biosynthesis. Catalyzes the aerobic oxidative decarboxylation of propionate groups of rings A and B of coproporphyrinogen-III to yield the vinyl groups in protoporphyrinogen-IX. In Rickettsia peacockii (strain Rustic), this protein is Oxygen-dependent coproporphyrinogen-III oxidase.